We begin with the raw amino-acid sequence, 129 residues long: Glycine cleavage system H protein (129 aa).

The 83-residue stretch at 24-106 (SYTVGITEHA…YGEGWFFRVM (83 aa)) folds into the Lipoyl-binding domain. Lysine 65 is modified (N6-lipoyllysine).

It belongs to the GcvH family. The glycine cleavage system is composed of four proteins: P, T, L and H. Requires (R)-lipoate as cofactor.

In terms of biological role, the glycine cleavage system catalyzes the degradation of glycine. The H protein shuttles the methylamine group of glycine from the P protein to the T protein. This Shewanella baltica (strain OS155 / ATCC BAA-1091) protein is Glycine cleavage system H protein.